The chain runs to 887 residues: Alanine--tRNA ligase (887 aa).

Zn(2+) contacts are provided by H564, H568, C676, and H680.

The protein belongs to the class-II aminoacyl-tRNA synthetase family. Zn(2+) serves as cofactor.

It localises to the cytoplasm. It catalyses the reaction tRNA(Ala) + L-alanine + ATP = L-alanyl-tRNA(Ala) + AMP + diphosphate. Functionally, catalyzes the attachment of alanine to tRNA(Ala) in a two-step reaction: alanine is first activated by ATP to form Ala-AMP and then transferred to the acceptor end of tRNA(Ala). Also edits incorrectly charged Ser-tRNA(Ala) and Gly-tRNA(Ala) via its editing domain. The sequence is that of Alanine--tRNA ligase from Sinorhizobium medicae (strain WSM419) (Ensifer medicae).